We begin with the raw amino-acid sequence, 510 residues long: 1,3-beta-glucanosyltransferase gas5 (510 aa).

The signal sequence occupies residues 1-22 (MNFLHFLTTSLLLLGGSRLALA). Cysteine 70 and cysteine 99 are joined by a disulfide. Residue tyrosine 88 coordinates (1,3-beta-D-glucosyl)n. Asparagine 147 carries N-linked (GlcNAc...) asparagine glycosylation. (1,3-beta-D-glucosyl)n is bound by residues asparagine 158, glutamate 159, aspartate 200, and arginine 205. The active-site Proton donor is glutamate 159. Disulfide bonds link cysteine 214/cysteine 353 and cysteine 232/cysteine 264. N-linked (GlcNAc...) asparagine glycosylation is found at asparagine 216 and asparagine 252. Glutamate 261 functions as the Nucleophile in the catalytic mechanism. Tyrosine 300 contributes to the (1,3-beta-D-glucosyl)n binding site. 3 N-linked (GlcNAc...) asparagine glycosylation sites follow: asparagine 318, asparagine 337, and asparagine 397. The interval 424 to 456 (QSSTSGSSSGSSSASTTASSSSVSSGSSISSGS) is disordered. The GPI-anchor amidated serine moiety is linked to residue serine 485. A propeptide spans 486–510 (SASTFNLSRFYVFAGILAISGLVFA) (removed in mature form). An N-linked (GlcNAc...) asparagine glycan is attached at asparagine 491.

This sequence belongs to the glycosyl hydrolase 72 family. In terms of processing, the GPI-anchor is attached to the protein in the endoplasmic reticulum and serves to target the protein to the cell surface. There, the glucosamine-inositol phospholipid moiety is cleaved off and the GPI-modified mannoprotein is covalently attached via its lipidless GPI glycan remnant to the 1,6-beta-glucan of the outer cell wall layer.

Its subcellular location is the secreted. The protein resides in the cell wall. The protein localises to the membrane. Functionally, splits internally a 1,3-beta-glucan molecule and transfers the newly generated reducing end (the donor) to the non-reducing end of another 1,3-beta-glucan molecule (the acceptor) forming a 1,3-beta linkage, resulting in the elongation of 1,3-beta-glucan chains in the cell wall. This is 1,3-beta-glucanosyltransferase gas5 (gas5) from Schizosaccharomyces pombe (strain 972 / ATCC 24843) (Fission yeast).